Consider the following 343-residue polypeptide: Methionine synthase (343 aa).

The Zn(2+) site is built by His211, Cys213, Glu236, and Cys315.

This sequence belongs to the archaeal MetE family. It depends on Zn(2+) as a cofactor.

Its pathway is amino-acid biosynthesis; L-methionine biosynthesis via de novo pathway. Functionally, catalyzes the transfer of a methyl group to L-homocysteine resulting in methionine formation. The physiological methyl donor is unknown. The sequence is that of Methionine synthase from Thermoplasma acidophilum (strain ATCC 25905 / DSM 1728 / JCM 9062 / NBRC 15155 / AMRC-C165).